The sequence spans 552 residues: Phosphoglucomutase (552 aa).

The active-site Phosphoserine intermediate is the S143. S143, D295, D297, and D299 together coordinate Mg(2+).

The protein belongs to the phosphohexose mutase family. Mg(2+) serves as cofactor.

It catalyses the reaction alpha-D-glucose 1-phosphate = alpha-D-glucose 6-phosphate. It participates in glycolipid metabolism; diglucosyl-diacylglycerol biosynthesis. Its function is as follows. Catalyzes the interconversion between glucose-6-phosphate and alpha-glucose-1-phosphate. This is the first step in the biosynthesis of diglucosyl-diacylglycerol (Glc2-DAG), i.e. the predominant glycolipid found in the S.aureus membrane, which is also used as a membrane anchor for lipoteichoic acid (LTA). The chain is Phosphoglucomutase (pgcA) from Staphylococcus aureus (strain MSSA476).